The chain runs to 151 residues: Flagellar assembly factor FliW (151 aa).

This sequence belongs to the FliW family. In terms of assembly, interacts with translational regulator CsrA and flagellin(s).

The protein localises to the cytoplasm. In terms of biological role, acts as an anti-CsrA protein, binds CsrA and prevents it from repressing translation of its target genes, one of which is flagellin. Binds to flagellin and participates in the assembly of the flagellum. The polypeptide is Flagellar assembly factor FliW (Lachnospira eligens (strain ATCC 27750 / DSM 3376 / VPI C15-48 / C15-B4) (Eubacterium eligens)).